The sequence spans 487 residues: GTPase Der (487 aa).

2 consecutive EngA-type G domains span residues 2–164 (KTIA…SLAK) and 203–374 (IAVG…QRFA). Residues 8–15 (GKPNVGKS), 55–59 (DTGGI), 116–119 (NKVD), 209–216 (GRVNVGKS), 256–260 (DTAGI), and 320–323 (NKWD) contribute to the GTP site. The KH-like domain maps to 375–459 (YRIPTSALND…PILLSVKGKN (85 aa)). Residues 459–480 (NAKDEENTSAKKESPSKVSHRE) show a composition bias toward basic and acidic residues. A disordered region spans residues 459 to 487 (NAKDEENTSAKKESPSKVSHRESKNRRFV).

The protein belongs to the TRAFAC class TrmE-Era-EngA-EngB-Septin-like GTPase superfamily. EngA (Der) GTPase family. In terms of assembly, associates with the 50S ribosomal subunit.

Functionally, GTPase that plays an essential role in the late steps of ribosome biogenesis. The sequence is that of GTPase Der from Helicobacter hepaticus (strain ATCC 51449 / 3B1).